A 583-amino-acid polypeptide reads, in one-letter code: Radixin (583 aa).

Positions 5-295 constitute an FERM domain; the sequence is INVRVTTMDA…GNHELYMRRR (291 aa). Residue 60-63 participates in a 1,2-diacyl-sn-glycero-3-phospho-(1D-myo-inositol) binding; that stretch reads KLNK. N6-succinyllysine is present on K83. A 1,2-diacyl-sn-glycero-3-phospho-(1D-myo-inositol) is bound at residue K278. Disordered stretches follow at residues 310–336, 374–407, and 458–526; these read REEK…AEKE, ELDQ…AKQA, and KTKE…RVNK. Residues 374-400 show a composition bias toward basic and acidic residues; the sequence is ELDQERKRAKEEAERLEKERRAAEEAK. The span at 469–480 shows a compositional bias: pro residues; that stretch reads APPPPPPPPVVP. Basic and acidic residues-rich tracts occupy residues 483-492 and 506-525; these read ENEHDEHDEN and MNHR…ERVN. A Phosphothreonine; by ROCK2 modification is found at T564.

As to quaternary structure, interacts with CPNE1 (via VWFA domain) and CPNE4 (via VWFA domain). Binds NHERF1. Interacts with NHERF1, NHERF2, LAYN, MME/NEP and ICAM2. Interacts (via FERM domain) with SPN/CD43 cytoplasmic tail. Interacts with CD44. Interacts with CLIC5; may work together in a complex which also includes EZR and MYO6 to stabilize linkages between the plasma membrane and subjacent actin cytoskeleton at the base of stereocilia. Post-translationally, phosphorylated by tyrosine-protein kinases. Phosphorylation by ROCK2 suppresses the head-to-tail association of the N-terminal and C-terminal halves resulting in an opened conformation which is capable of actin and membrane-binding.

The protein resides in the cell membrane. It localises to the cytoplasm. It is found in the cytoskeleton. The protein localises to the cleavage furrow. Its subcellular location is the cell projection. The protein resides in the microvillus. It localises to the stereocilium. With respect to regulation, a head-to-tail association, of the N-terminal and C-terminal halves results in a closed conformation (inactive form) which is incapable of actin or membrane-binding. In terms of biological role, probably plays a crucial role in the binding of the barbed end of actin filaments to the plasma membrane. The chain is Radixin (RDX) from Sus scrofa (Pig).